The sequence spans 109 residues: Large ribosomal subunit protein uL23 (109 aa).

The protein belongs to the universal ribosomal protein uL23 family. Part of the 50S ribosomal subunit. Contacts protein L29, and trigger factor when it is bound to the ribosome.

One of the early assembly proteins it binds 23S rRNA. One of the proteins that surrounds the polypeptide exit tunnel on the outside of the ribosome. Forms the main docking site for trigger factor binding to the ribosome. The chain is Large ribosomal subunit protein uL23 from Haemophilus influenzae (strain PittEE).